The following is a 97-amino-acid chain: MQFHTGLLLAAVLSLQLAAAQALWCHQCTGFGGCSRGSRCPRDSTHCVTTATRVLSNIENLPLVTKMCHTGCPDIPSLGLGPYVSIACCQTSLCNHD.

The first 22 residues, 1–22, serve as a signal peptide directing secretion; it reads MQFHTGLLLAAVLSLQLAAAQA. The region spanning 23–95 is the UPAR/Ly6 domain; it reads LWCHQCTGFG…IACCQTSLCN (73 aa). Disulfide bonds link Cys25–Cys47, Cys28–Cys34, Cys40–Cys68, Cys72–Cys88, and Cys89–Cys94.

Interacts with CHRNA3, CHRNA4, CHRNA5, CHRNA7, CHRNB2 and CHRNB4. Interacts with CHRM1 and CHRM3 probably in an allosteric manner.

It is found in the secreted. Functionally, binds and may modulate the functional properties of nicotinic and muscarinic acetylcholine receptors. May regulate keratinocytes proliferation, differentiation and apoptosis. In vitro moderately inhibits ACh-evoked currents of alpha-3:beta-2-containing nAChRs, strongly these of alpha-4:beta-2-containing nAChRs, modulates alpha-7-containing nAChRs, and inhibits nicotine-induced signaling probably implicating alpha-3:beta-4-containing nAChRs. Proposed to act on alpha-3:beta-2 and alpha-7 nAChRs in an orthosteric, and on mAChRs, such as CHRM1 and CHRM3, in an allosteric manner. This Macaca mulatta (Rhesus macaque) protein is Secreted Ly-6/uPAR domain-containing protein 2.